A 441-amino-acid polypeptide reads, in one-letter code: Chitinase-like protein Idgf3 (441 aa).

An N-terminal signal peptide occupies residues 1–23 (MTGSLWLSLALSLAVLAQFKVSA). Residues 25 to 441 (PNLVCFYDSQ…MLRAIKYRLL (417 aa)) enclose the GH18 domain. Cys29 and Cys56 are disulfide-bonded. N-linked (GlcNAc...) asparagine glycosylation occurs at Asn221. The disordered stretch occupies residues 309–331 (SGDSGMPVVPSTQGPAPAGPQSK). Cys342 and Cys425 are joined by a disulfide.

It belongs to the glycosyl hydrolase 18 family. IDGF subfamily. Glycosylated.

It is found in the secreted. Cooperates with insulin-like peptides to stimulate the proliferation, polarization and motility of imaginal disk cells. May act by stabilizing the binding of insulin-like peptides to its receptor through a simultaneous interaction with both molecules to form a multiprotein signaling complex. This chain is Chitinase-like protein Idgf3 (Idgf3), found in Drosophila yakuba (Fruit fly).